We begin with the raw amino-acid sequence, 157 residues long: Crossover junction endodeoxyribonuclease RuvC (157 aa).

Catalysis depends on residues D7, E67, and D140. D7, E67, and D140 together coordinate Mg(2+).

The protein belongs to the RuvC family. As to quaternary structure, homodimer which binds Holliday junction (HJ) DNA. The HJ becomes 2-fold symmetrical on binding to RuvC with unstacked arms; it has a different conformation from HJ DNA in complex with RuvA. In the full resolvosome a probable DNA-RuvA(4)-RuvB(12)-RuvC(2) complex forms which resolves the HJ. The cofactor is Mg(2+).

The protein localises to the cytoplasm. The catalysed reaction is Endonucleolytic cleavage at a junction such as a reciprocal single-stranded crossover between two homologous DNA duplexes (Holliday junction).. Functionally, the RuvA-RuvB-RuvC complex processes Holliday junction (HJ) DNA during genetic recombination and DNA repair. Endonuclease that resolves HJ intermediates. Cleaves cruciform DNA by making single-stranded nicks across the HJ at symmetrical positions within the homologous arms, yielding a 5'-phosphate and a 3'-hydroxyl group; requires a central core of homology in the junction. The consensus cleavage sequence is 5'-(A/T)TT(C/G)-3'. Cleavage occurs on the 3'-side of the TT dinucleotide at the point of strand exchange. HJ branch migration catalyzed by RuvA-RuvB allows RuvC to scan DNA until it finds its consensus sequence, where it cleaves and resolves the cruciform DNA. This Rickettsia bellii (strain RML369-C) protein is Crossover junction endodeoxyribonuclease RuvC.